Consider the following 90-residue polypeptide: Small ribosomal subunit protein bS16 (90 aa).

The protein belongs to the bacterial ribosomal protein bS16 family.

This chain is Small ribosomal subunit protein bS16, found in Lactiplantibacillus plantarum (strain ATCC BAA-793 / NCIMB 8826 / WCFS1) (Lactobacillus plantarum).